The chain runs to 591 residues: Solute carrier family 40 member 2, chloroplastic (591 aa).

The N-terminal 66 residues, 1–66, are a transit peptide targeting the chloroplast; that stretch reads MGMVTATAAA…RCYITNVEVD (66 aa). Helical transmembrane passes span 159–179, 206–226, 242–262, 293–313, 318–338, 391–411, 419–439, 452–472, 482–502, 518–540, and 547–569; these read WPAA…VGFF, GLNA…IYAM, WFIA…ALGV, LVCE…YHPV, IACG…QLIN, VATV…MTAL, PSIV…ATFI, AGAA…VVYW, LLIF…YDVV, LIGG…MAII, and FGFL…CQWL.

The protein belongs to the ferroportin (FP) (TC 2.A.100) family. SLC40A subfamily.

It is found in the membrane. It localises to the plastid. The protein localises to the chloroplast envelope. May be involved in iron transport and iron homeostasis. This Oryza sativa subsp. japonica (Rice) protein is Solute carrier family 40 member 2, chloroplastic.